The following is a 162-amino-acid chain: Auracyanin-A (162 aa).

Positions 1–22 are cleaved as a signal peptide; sequence MKITLRMMVLAVLTAMAMVLAA. Cysteine 23 carries the N-palmitoyl cysteine lipid modification. Residue cysteine 23 is the site of S-diacylglycerol cysteine attachment. Positions 42–162 constitute a Plastocyanin-like domain; the sequence is VTIEIGSKGE…PLMQGKLVVN (121 aa). The Cu cation site is built by histidine 81, cysteine 146, histidine 151, and methionine 155.

In terms of assembly, monomer. Cu cation is required as a cofactor.

It localises to the cell membrane. Functionally, probably a soluble electron acceptor for the integral membrane protein electron transfer alternative complex III (ACIII). The polypeptide is Auracyanin-A (Chloroflexus aurantiacus (strain ATCC 29366 / DSM 635 / J-10-fl)).